Reading from the N-terminus, the 140-residue chain is MSKRGRGGSSGAKFRISLGLPVGAVINCADNTGAKNLYIISVKGIKGRLNRLPAAGVGDMVMATVKKGKPELRKKVHPAVVIRQRKSYRRKDGVFLYFEDNAGVIVNNKGEMKGSAITGPVAKECADLWPRIASNAGSIA.

It belongs to the universal ribosomal protein uL14 family. As to quaternary structure, component of the large ribosomal subunit.

The protein localises to the cytoplasm. Functionally, component of the large ribosomal subunit. The ribosome is a large ribonucleoprotein complex responsible for the synthesis of proteins in the cell. In Ictalurus punctatus (Channel catfish), this protein is Large ribosomal subunit protein uL14 (rpl23).